A 984-amino-acid polypeptide reads, in one-letter code: Ephrin type-B receptor 1 (984 aa).

The first 17 residues, Met1–Ala17, serve as a signal peptide directing secretion. Residues Met18 to Pro540 are Extracellular-facing. The 183-residue stretch at Glu19 to Gln201 folds into the Eph LBD domain. 2 Fibronectin type-III domains span residues Val322–Ala432 and Ala433–Asp528. Asn334, Asn426, and Asn480 each carry an N-linked (GlcNAc...) asparagine glycan. Residues Leu541–Cys563 traverse the membrane as a helical segment. The Cytoplasmic segment spans residues Ser564–Ala984. The residue at position 600 (Tyr600) is a Phosphotyrosine. In terms of domain architecture, Protein kinase spans Val619–Ile882. ATP is bound by residues Ile625–Val633 and Lys651. Asp744 (proton acceptor) is an active-site residue. Residues Thr911–Gln975 enclose the SAM domain. Tyr928 is subject to Phosphotyrosine; by autocatalysis. The short motif at Val982–Ala984 is the PDZ-binding element.

This sequence belongs to the protein kinase superfamily. Tyr protein kinase family. Ephrin receptor subfamily. Heterotetramer upon binding of the ligand. The heterotetramer is composed of an ephrin dimer and a receptor dimer. Oligomerization is probably required to induce biological responses. Interacts with EPHB6; transphosphorylates EPHB6 to form an active signaling complex. Interacts with PICK1. Interacts (through Tyr-594) with NCK1 (via SH2 domain); activates the JUN cascade to regulate cell adhesion. The ligand-activated form interacts (through Tyr-928) with GRB7 and GRB10 (via SH2 domains). The ligand-activated form interacts (residues within the catalytic domain) with GRB2 (via SH2 domain). Interacts with GRB2, SHC1 and SRC; activates the MAPK/ERK cascade to regulate cell migration. Interacts with CBL; regulates receptor degradation through ubiquitination. Interacts with ACP1. In terms of processing, phosphorylated. Autophosphorylation is stimulated by the ligand EFNB1. Required for interaction with SH2 domain-containing interactors, for activation of the MAPK/ERK and JUN signaling cascades and for ubiquitination by CBL. Ubiquitinated; (EFNB1)ligand-induced poly- and/or multi-ubiquitination by CBL is regulated by SRC and leads to lysosomal degradation. As to expression, expressed in neural stem and progenitor cells in the dentate gyrus. Expressed in myogenic progenitor cells.

Its subcellular location is the cell membrane. It localises to the early endosome membrane. It is found in the cell projection. The protein localises to the dendrite. It catalyses the reaction L-tyrosyl-[protein] + ATP = O-phospho-L-tyrosyl-[protein] + ADP + H(+). Its function is as follows. Receptor tyrosine kinase which binds promiscuously transmembrane ephrin-B family ligands residing on adjacent cells, leading to contact-dependent bidirectional signaling into neighboring cells. The signaling pathway downstream of the receptor is referred to as forward signaling while the signaling pathway downstream of the ephrin ligand is referred to as reverse signaling. Cognate/functional ephrin ligands for this receptor include EFNB1, EFNB2 and EFNB3. During nervous system development, regulates retinal axon guidance redirecting ipsilaterally ventrotemporal retinal ganglion cells axons at the optic chiasm midline. This probably requires repulsive interaction with EFNB2. In the adult nervous system together with EFNB3, regulates chemotaxis, proliferation and polarity of the hippocampus neural progenitors. In addition to its role in axon guidance also plays an important redundant role with other ephrin-B receptors in development and maturation of dendritic spines and synapse formation. May also regulate angiogenesis. More generally, may play a role in targeted cell migration and adhesion. Upon activation by EFNB1 and probably other ephrin-B ligands activates the MAPK/ERK and the JNK signaling cascades to regulate cell migration and adhesion respectively. Involved in the maintenance of the pool of satellite cells (muscle stem cells) by promoting their self-renewal and reducing their activation and differentiation. This is Ephrin type-B receptor 1 (Ephb1) from Mus musculus (Mouse).